The sequence spans 175 residues: Nucleoplasmin-3 (175 aa).

A2 is modified (N-acetylalanine). S16 carries the phosphoserine modification. R27 is subject to Omega-N-methylarginine. Residues S147 and S151 each carry the phosphoserine modification.

This sequence belongs to the nucleoplasmin family. As to quaternary structure, interacts with NPM (via N-terminus). Forms a pentamer with NPM at a ratio 4:1 (NPM3/NPM). Two pentamers form a decamer. Post-translationally, phosphorylated. Predominantly expressed in testis.

Its subcellular location is the nucleus. The protein localises to the nucleolus. In terms of biological role, plays a role in the regulation of diverse cellular processes such as ribosome biogenesis, chromatin remodeling or protein chaperoning. Modulates the histone chaperone function and the RNA-binding activity of nucleolar phosphoprotein B23/NPM. Efficiently mediates chromatin remodeling when included in a pentamer containing NPM3 and NPM. This chain is Nucleoplasmin-3 (Npm3), found in Mus musculus (Mouse).